The primary structure comprises 311 residues: Homeobox-leucine zipper protein HOX1 (311 aa).

2 disordered regions span residues 29 to 69 (AGGA…SDHR) and 97 to 160 (AETT…KKLR). The segment covering 119-145 (SSPNSTLSSLSGKRGAPSAATAAAAAA) has biased composition (low complexity). A DNA-binding region (homeobox) is located at residues 154–213 (GSRKKLRLSKDQAAVLEDTFKEHNTLNPKQKAALARQLNLKPRQVEVWFQNRRARTKLKQ). The interval 212-256 (KQTEVDCELLKRCCETLTDENRRLHRELQELRALKLATAAAAPHH) is leucine-zipper. The disordered stretch occupies residues 279–311 (SAATTTRNNSGAAPARPVPTRPWPPAAAQRSSA). Over residues 280-289 (AATTTRNNSG) the composition is skewed to polar residues. Over residues 294–303 (RPVPTRPWPP) the composition is skewed to pro residues.

This sequence belongs to the HD-ZIP homeobox family. Class II subfamily. Homodimer. May form a heterodimer with HOX2, HOX3 or HOX7. As to expression, expressed in root provascular and vascular cylinder, provascular and vascular strands of leaves, provascular and vascular strands of the whole panicle, in mature embryo provascular bundles of scutellum and embryonic axis and provascular and vascular strands of young immature spikelet organs. Expressed in differentiating and differentiated xylem and phloem elements, and in outer and inner bundle sheath cells of all vascular bundles. Expressed in auricles, ligules, culm, guard cells brac hairs and pollen.

Its subcellular location is the nucleus. Functionally, probable transcription repressor involved leaf development. Binds to the DNA sequence 5'-CAAT[GC]ATTG-3'. May act as a regulatory switch to specify provascular cell fate. The polypeptide is Homeobox-leucine zipper protein HOX1 (HOX1) (Oryza sativa subsp. japonica (Rice)).